A 155-amino-acid polypeptide reads, in one-letter code: MARKKIVSGHLKNAISKDEHISVKFVNCIMRDGKKSVAEKVFKDAMELVEEKLGESSLKVFEKAIGNIRPSVEVKSRRVGGSTYQVPTEIKSSRQTALAFRWLLRFSRSRSEKGLSNKLAAELLDAYNERGGAVKKKEDTHKMAEANKAFAHFRW.

Belongs to the universal ribosomal protein uS7 family. As to quaternary structure, part of the 30S ribosomal subunit. Contacts proteins S9 and S11.

Its function is as follows. One of the primary rRNA binding proteins, it binds directly to 16S rRNA where it nucleates assembly of the head domain of the 30S subunit. Is located at the subunit interface close to the decoding center, probably blocks exit of the E-site tRNA. This chain is Small ribosomal subunit protein uS7, found in Desulforapulum autotrophicum (strain ATCC 43914 / DSM 3382 / VKM B-1955 / HRM2) (Desulfobacterium autotrophicum).